A 647-amino-acid chain; its full sequence is Frizzled-1 (647 aa).

The signal sequence occupies residues 1–69 (MAEEEAPKKS…WLLEAPLLLG (69 aa)). At 73–322 (QAAGQGPGQG…PEELRFSRTW (250 aa)) the chain is on the extracellular side. The interval 74-104 (AAGQGPGQGPGPGQQPPPPPQQQQSGQQYNG) is disordered. The 120-residue stretch at 111 to 230 (PDHGYCQPIS…HGAGELCVGQ (120 aa)) folds into the FZ domain. 5 disulfides stabilise this stretch: C116–C177, C124–C170, C161–C198, C187–C227, and C191–C215. N-linked (GlcNAc...) asparagine glycosylation occurs at N130. N231 carries N-linked (GlcNAc...) asparagine glycosylation. Residues 323-343 (IGIWSVLCCASTLFTVLTYLV) form a helical membrane-spanning segment. The Cytoplasmic segment spans residues 344 to 354 (DMRRFSYPERP). The chain crosses the membrane as a helical span at residues 355–375 (IIFLSGCYTAVAVAYIAGFLL). Residues 376–402 (EDRVVCNDKFAEDGARTVAQGTKKEGC) are Extracellular-facing. The helical transmembrane segment at 403–423 (TILFMMLYFFSMASSIWWVIL) threads the bilayer. The Cytoplasmic segment spans residues 424–445 (SLTWFLAAGMKWGHEAIEANSQ). A helical membrane pass occupies residues 446–466 (YFHLAAWAVPAIKTITILALG). Topologically, residues 467–489 (QVDGDVLSGVCFVGLNNVDALRG) are extracellular. The chain crosses the membrane as a helical span at residues 490–510 (FVLAPLFVYLFIGTSFLLAGF). Topologically, residues 511-536 (VSLFRIRTIMKHDGTKTEKLEKLMVR) are cytoplasmic. The chain crosses the membrane as a helical span at residues 537–557 (IGVFSVLYTVPATIVIACYFY). Topologically, residues 558-601 (EQAFRDQWERSWVAQSCKSYAIPCPHLQAGGGAPPHPPMSPDFT) are extracellular. A helical membrane pass occupies residues 602 to 622 (VFMIKYLMTLIVGITSGFWIW). At 623–647 (SGKTLNSWRKFYTRLTNSKQGETTV) the chain is on the cytoplasmic side. A Lys-Thr-X-X-X-Trp motif, mediates interaction with the PDZ domain of Dvl family members motif is present at residues 625–630 (KTLNSW). Positions 645–647 (TTV) match the PDZ-binding motif.

Belongs to the G-protein coupled receptor Fz/Smo family. In terms of assembly, interacts with MYOC. Interacts with WNT7B. (Microbial infection) Interacts with C.difficile toxin TcdB; frizzled receptors constitute the major host receptors for TcdB in the colonic epithelium. Ubiquitinated by ZNRF3, leading to its degradation by the proteasome. Expressed in adult heart, placenta, lung, kidney, pancreas, prostate, and ovary and in fetal lung and kidney.

The protein localises to the cell membrane. In terms of biological role, receptor for Wnt proteins. Activated by WNT3A, WNT3, WNT1 and to a lesser extent WNT2, but apparently not by WNT4, WNT5A, WNT5B, WNT6, WNT7A or WNT7B. Contradictory results showing activation by WNT7B have been described for mouse. Functions in the canonical Wnt/beta-catenin signaling pathway. The canonical Wnt/beta-catenin signaling pathway leads to the activation of disheveled proteins, inhibition of GSK-3 kinase, nuclear accumulation of beta-catenin and activation of Wnt target genes. A second signaling pathway involving PKC and calcium fluxes has been seen for some family members, but it is not yet clear if it represents a distinct pathway or if it can be integrated in the canonical pathway, as PKC seems to be required for Wnt-mediated inactivation of GSK-3 kinase. Both pathways seem to involve interactions with G-proteins. May be involved in transduction and intercellular transmission of polarity information during tissue morphogenesis and/or in differentiated tissues. (Microbial infection) Acts as a receptor for C.difficile toxin TcdB in the colonic epithelium. In Homo sapiens (Human), this protein is Frizzled-1 (FZD1).